Consider the following 176-residue polypeptide: Large ribosomal subunit protein uL22 (176 aa).

A disordered region spans residues 113–176; sequence VVESRPSKDQ…EISEAKGGSD (64 aa). The span at 136–152 shows a compositional bias: low complexity; sequence SKAAATAPAKKSSASKA. The span at 159–176 shows a compositional bias: basic and acidic residues; that stretch reads TKAESKTSEISEAKGGSD.

It belongs to the universal ribosomal protein uL22 family. As to quaternary structure, part of the 50S ribosomal subunit.

In terms of biological role, this protein binds specifically to 23S rRNA; its binding is stimulated by other ribosomal proteins, e.g. L4, L17, and L20. It is important during the early stages of 50S assembly. It makes multiple contacts with different domains of the 23S rRNA in the assembled 50S subunit and ribosome. The globular domain of the protein is located near the polypeptide exit tunnel on the outside of the subunit, while an extended beta-hairpin is found that lines the wall of the exit tunnel in the center of the 70S ribosome. This chain is Large ribosomal subunit protein uL22, found in Mycobacterium ulcerans (strain Agy99).